The primary structure comprises 378 residues: Ribosomal RNA large subunit methyltransferase G (378 aa).

The protein belongs to the methyltransferase superfamily. RlmG family.

The protein resides in the cytoplasm. It catalyses the reaction guanosine(1835) in 23S rRNA + S-adenosyl-L-methionine = N(2)-methylguanosine(1835) in 23S rRNA + S-adenosyl-L-homocysteine + H(+). In terms of biological role, specifically methylates the guanine in position 1835 (m2G1835) of 23S rRNA. The polypeptide is Ribosomal RNA large subunit methyltransferase G (Shewanella sp. (strain W3-18-1)).